A 366-amino-acid polypeptide reads, in one-letter code: Inactive protein RESTRICTED TEV MOVEMENT 2 (366 aa).

Positions valine 14–alanine 121 constitute a sHSP domain. One copy of the A-1 repeat lies at leucine 129–arginine 133. The segment at leucine 129–lysine 220 is 6 X 5 AA repeats A of L-E-E-[SKR]-[ERK]. One copy of the A-2 repeat lies at leucine 135–arginine 139. An A-3 repeat occupies leucine 156–glutamate 160. The stretch at isoleucine 163 to alanine 176 is one B-1 repeat. Residues isoleucine 163 to leucine 206 form a 3 X 14 AA repeats B of [IMA]-[RK]-K-L-Q-E-E-A-K-A-K-E-[EK]-[LA] region. One copy of the B-2 repeat lies at methionine 178 to alanine 191. One copy of the B-3 repeat lies at alanine 193–lysine 205. An A-4 repeat occupies leucine 206–lysine 210. An A-5 repeat occupies leucine 211–arginine 215. An A-6 repeat occupies leucine 216–lysine 220. The chain crosses the membrane as a helical span at residues leucine 322–tyrosine 342. A disordered region spans residues cysteine 345–glutamate 366. A compositionally biased stretch (low complexity) spans serine 346–glutamate 366.

The protein belongs to the small heat shock protein (HSP20) family.

It is found in the cell membrane. Seems to not be involved in heat resistance. Unable to mediate restriction of long-distance movement of the pathogenic tobacco etch virus (TEV) without causing a hypersensitive response or inducing systemic acquired resistance. The protein is Inactive protein RESTRICTED TEV MOVEMENT 2 (RTM2) of Arabidopsis thaliana (Mouse-ear cress).